A 154-amino-acid chain; its full sequence is U1 small nuclear ribonucleoprotein C (154 aa).

The segment at 4–36 adopts a Matrin-type zinc-finger fold; the sequence is YYCDYCDTYLTHDSPSVRKTHCTGRKHKDNVKF.

It belongs to the U1 small nuclear ribonucleoprotein C family. As to quaternary structure, U1 snRNP is composed of the 7 core Sm proteins B/B', D1, D2, D3, E, F and G that assemble in a heptameric protein ring on the Sm site of the small nuclear RNA to form the core snRNP, and at least 3 U1 snRNP-specific proteins U1-70K, U1-A and U1-C. U1-C interacts with U1 snRNA and the 5' splice-site region of the pre-mRNA.

The protein resides in the nucleus. Its function is as follows. Component of the spliceosomal U1 snRNP, which is essential for recognition of the pre-mRNA 5' splice-site and the subsequent assembly of the spliceosome. U1-C is directly involved in initial 5' splice-site recognition for both constitutive and regulated alternative splicing. The interaction with the 5' splice-site seems to precede base-pairing between the pre-mRNA and the U1 snRNA. Stimulates commitment or early (E) complex formation by stabilizing the base pairing of the 5' end of the U1 snRNA and the 5' splice-site region. The chain is U1 small nuclear ribonucleoprotein C from Aedes aegypti (Yellowfever mosquito).